The primary structure comprises 299 residues: Glycine--tRNA ligase alpha subunit (299 aa).

Belongs to the class-II aminoacyl-tRNA synthetase family. Tetramer of two alpha and two beta subunits.

Its subcellular location is the cytoplasm. It carries out the reaction tRNA(Gly) + glycine + ATP = glycyl-tRNA(Gly) + AMP + diphosphate. The polypeptide is Glycine--tRNA ligase alpha subunit (Desulforapulum autotrophicum (strain ATCC 43914 / DSM 3382 / VKM B-1955 / HRM2) (Desulfobacterium autotrophicum)).